The following is a 190-amino-acid chain: Threonylcarbamoyl-AMP synthase (190 aa).

Residues 7–190 (GDAIAAAIDV…ALTGELFRQG (184 aa)) form the YrdC-like domain.

This sequence belongs to the SUA5 family. TsaC subfamily.

It is found in the cytoplasm. It catalyses the reaction L-threonine + hydrogencarbonate + ATP = L-threonylcarbamoyladenylate + diphosphate + H2O. In terms of biological role, required for the formation of a threonylcarbamoyl group on adenosine at position 37 (t(6)A37) in tRNAs that read codons beginning with adenine. Catalyzes the conversion of L-threonine, HCO(3)(-)/CO(2) and ATP to give threonylcarbamoyl-AMP (TC-AMP) as the acyladenylate intermediate, with the release of diphosphate. This chain is Threonylcarbamoyl-AMP synthase, found in Shigella dysenteriae serotype 1 (strain Sd197).